The chain runs to 797 residues: Probable exo-1,4-beta-xylosidase xlnD (797 aa).

An N-terminal signal peptide occupies residues 1–20 (MPGAASIVAVLAALLPTALG). N-linked (GlcNAc...) asparagine glycosylation is found at N23, N87, N142, and N237. Residue D310 is part of the active site. 11 N-linked (GlcNAc...) asparagine glycosylation sites follow: N326, N391, N404, N442, N479, N521, N617, N644, N657, N684, and N706.

It belongs to the glycosyl hydrolase 3 family.

The protein resides in the secreted. It catalyses the reaction Hydrolysis of (1-&gt;4)-beta-D-xylans, to remove successive D-xylose residues from the non-reducing termini.. It participates in glycan degradation; xylan degradation. In terms of biological role, xylan 1,4-beta-xylosidase involved in the hydrolysis of xylan, a major structural heterogeneous polysaccharide found in plant biomass representing the second most abundant polysaccharide in the biosphere, after cellulose. In Aspergillus flavus (strain ATCC 200026 / FGSC A1120 / IAM 13836 / NRRL 3357 / JCM 12722 / SRRC 167), this protein is Probable exo-1,4-beta-xylosidase xlnD (xlnD).